We begin with the raw amino-acid sequence, 174 residues long: Guided entry of tail-anchored proteins factor 1 (174 aa).

At methionine 1 to histidine 8 the chain is on the lumenal side. The chain crosses the membrane as a helical span at residues tryptophan 9 to proline 29. The Cytoplasmic portion of the chain corresponds to serine 30–lysine 99. Residues leucine 39 to threonine 94 adopt a coiled-coil conformation. The tract at residues leucine 39–leucine 97 is interaction with GET3/TRC40. Residues isoleucine 100 to isoleucine 120 traverse the membrane as a helical segment. The Lumenal portion of the chain corresponds to tryptophan 121–arginine 148. Residues valine 149 to valine 169 form a helical membrane-spanning segment. The Cytoplasmic segment spans residues leucine 170 to serine 174.

It belongs to the WRB/GET1 family. In terms of assembly, component of the Golgi to ER traffic (GET) complex, which is composed of GET1/WRB, CAMLG/GET2 and GET3/TRC40. Within the complex, GET1 and CAMLG form a heterotetramer which is stabilized by phosphatidylinositol binding and which binds to the GET3 homodimer. Interacts with CAMLG (via C-terminus). GET3 shows a higher affinity for CAMLG than for GET1.

The protein localises to the endoplasmic reticulum membrane. Required for the post-translational delivery of tail-anchored (TA) proteins to the endoplasmic reticulum (ER). Together with CAMLG/GET2, acts as a membrane receptor for soluble GET3/TRC40, which recognizes and selectively binds the transmembrane domain of TA proteins in the cytosol. Required to ensure correct topology and ER insertion of CAMLG. This Homo sapiens (Human) protein is Guided entry of tail-anchored proteins factor 1.